The primary structure comprises 1050 residues: DNA ligase 4 (1050 aa).

Positions 1 to 22 are disordered; sequence MNTNRRSRSPDEEALEEDQHQY. ATP-binding residues include glutamate 329, lysine 331, leucine 332, arginine 336, glutamate 398, phenylalanine 438, glutamate 498, lysine 503, lysine 520, and lysine 522. Lysine 331 (N6-AMP-lysine intermediate) is an active-site residue. A Mg(2+)-binding site is contributed by glutamate 398. Glutamate 498 lines the Mg(2+) pocket. The segment covering 691–702 has biased composition (basic and acidic residues); that stretch reads QEQERKKMEMEN. Positions 691–711 are disordered; the sequence is QEQERKKMEMENRKRKPATKR. BRCT domains are found at residues 742 to 840 and 936 to 1049; these read ASKR…KENK and LRSF…EYVA.

It belongs to the ATP-dependent DNA ligase family. Mg(2+) serves as cofactor.

The protein resides in the nucleus. It carries out the reaction ATP + (deoxyribonucleotide)n-3'-hydroxyl + 5'-phospho-(deoxyribonucleotide)m = (deoxyribonucleotide)n+m + AMP + diphosphate.. Functionally, DNA ligase involved in DNA non-homologous end joining (NHEJ); required for double-strand break (DSB) repair. This is DNA ligase 4 (mus-53) from Neurospora crassa (strain ATCC 24698 / 74-OR23-1A / CBS 708.71 / DSM 1257 / FGSC 987).